Consider the following 419-residue polypeptide: L-rhamnose isomerase (419 aa).

Histidine 262, aspartate 294, and aspartate 296 together coordinate Mn(2+).

It belongs to the rhamnose isomerase family. As to quaternary structure, homotetramer. Mn(2+) is required as a cofactor.

It is found in the cytoplasm. The enzyme catalyses L-rhamnopyranose = L-rhamnulose. It functions in the pathway carbohydrate degradation; L-rhamnose degradation; glycerone phosphate from L-rhamnose: step 1/3. Its function is as follows. Catalyzes the interconversion of L-rhamnose and L-rhamnulose. In Escherichia coli O157:H7, this protein is L-rhamnose isomerase.